The primary structure comprises 2341 residues: Pecanex-like protein 1 (2341 aa).

Transmembrane regions (helical) follow at residues alanine 28–tyrosine 50 and methionine 57–leucine 74. The segment at phenylalanine 98–arginine 163 is disordered. N-linked (GlcNAc...) asparagine glycosylation occurs at asparagine 109. Positions serine 143–arginine 163 are enriched in polar residues. N-linked (GlcNAc...) asparagine glycosylation is present at asparagine 215. 3 disordered regions span residues histidine 270 to proline 294, aspartate 311 to glutamate 331, and aspartate 344 to arginine 689. The segment covering histidine 272 to glycine 282 has biased composition (basic residues). Composition is skewed to polar residues over residues lysine 320–glutamate 331 and isoleucine 347–serine 356. N-linked (GlcNAc...) asparagine glycosylation is present at asparagine 348. The segment covering serine 370–glycine 388 has biased composition (low complexity). Asparagine 394 carries an N-linked (GlcNAc...) asparagine glycan. A compositionally biased stretch (polar residues) spans asparagine 394–glutamine 404. 3 stretches are compositionally biased toward basic and acidic residues: residues lysine 430–alanine 455, histidine 465–asparagine 478, and serine 527–proline 544. The span at alanine 554–alanine 569 shows a compositional bias: basic residues. Low complexity predominate over residues glutamine 605–serine 635. N-linked (GlcNAc...) asparagine glycosylation is present at asparagine 702. Residues glutamine 756–arginine 834 form a disordered region. A compositionally biased stretch (low complexity) spans leucine 814 to glutamine 832. N-linked (GlcNAc...) asparagine glycans are attached at residues asparagine 852 and asparagine 863. The next 3 helical transmembrane spans lie at isoleucine 1003–isoleucine 1025, isoleucine 1032–leucine 1049, and isoleucine 1067–serine 1089. Residue asparagine 1091 is glycosylated (N-linked (GlcNAc...) asparagine). The chain crosses the membrane as a helical span at residues phenylalanine 1110–leucine 1132. Asparagine 1155 carries N-linked (GlcNAc...) asparagine glycosylation. 4 helical membrane-spanning segments follow: residues leucine 1160–tyrosine 1182, isoleucine 1194–serine 1213, leucine 1266–leucine 1288, and valine 1295–proline 1312. N-linked (GlcNAc...) asparagine glycans are attached at residues asparagine 1579, asparagine 1720, asparagine 1982, asparagine 2062, and asparagine 2072. 2 disordered regions span residues asparagine 2062–arginine 2120 and glycine 2217–histidine 2237. Composition is skewed to polar residues over residues proline 2069 to isoleucine 2078, tyrosine 2096 to valine 2114, and glycine 2217 to serine 2236. Asparagine 2234 and asparagine 2260 each carry an N-linked (GlcNAc...) asparagine glycan.

The protein belongs to the pecanex family.

It is found in the membrane. The chain is Pecanex-like protein 1 from Homo sapiens (Human).